We begin with the raw amino-acid sequence, 1353 residues long: Inhibitor of Bruton tyrosine kinase (1353 aa).

ANK repeat units lie at residues 51–80 (FGRN…DLLV) and 85–114 (SGWT…SLYI). RCC1 repeat units follow at residues 141 to 194 (PTDV…FLSQ), 195 to 246 (KGQV…VLTE), and 248 to 301 (GCVY…LWTR). BTB domains are found at residues 564–644 (HDVT…DFLT) and 768–836 (CDVT…VVIK). An ANK 3 repeat occupies 806-835 (SSCAALEMPIHSDILKVILDYLYTDEAVVI). Positions 970 to 1001 (HSETMFKKAKTKAKKKPRKRSDSSGGYNLSDI) are disordered. Positions 976 to 988 (KKAKTKAKKKPRK) are enriched in basic residues. Position 990 is a phosphoserine (serine 990). Residues 992–1001 (SSGGYNLSDI) show a composition bias toward polar residues. 10 positions are modified to phosphoserine: serine 1004, serine 1030, serine 1033, serine 1039, serine 1045, serine 1054, serine 1083, serine 1111, serine 1113, and serine 1116. Positions 1134–1155 (KCGATPKSHLGKTVSHGVKLSQ) are disordered.

As to quaternary structure, interacts with the PH domain of BTK. Isoform 2 does not interact with BTK. As to expression, expressed in DeFew, HEK293T, HeLa and in Jurkat, MC3 and NB4 lymphoid cells (at protein level). Isoform 1 is the predominant isoform expressed in all examined tissues and cell lines. Highly expressed in hemopoietic tissues (fetal liver, spleen, lymph node, thymus, peripheral blood leukocytes and bone marrow). Weakly or not expressed in other tissues.

The protein resides in the cytoplasm. It localises to the membrane. It is found in the nucleus. Acts as an inhibitor of BTK tyrosine kinase activity, thereby playing a role in B-cell development. Down-regulates BTK kinase activity, leading to interference with BTK-mediated calcium mobilization and NF-kappa-B-driven transcription. The chain is Inhibitor of Bruton tyrosine kinase (IBTK) from Homo sapiens (Human).